The following is a 527-amino-acid chain: FHA domain-containing protein FhaA (527 aa).

A Phosphothreonine modification is found at Thr-116. The segment at 119 to 426 (FRARGTVNPD…APGGYSGYGQ (308 aa)) is disordered. Over residues 170-188 (RPDEYYDDRYARPQEDPRG) the composition is skewed to basic and acidic residues. Low complexity-rich tracts occupy residues 199–209 (RGGYPPETGGY) and 256–266 (YQDQGRGYPDQ). A compositionally biased stretch (pro residues) spans 271 to 283 (YPPPYEQRPPVSP). Residues 284 to 299 (GPAAGYGAPGYDQGYR) are compositionally biased toward low complexity. Gly residues predominate over residues 300 to 322 (QSGGYGPSPGGGQPGYGGYGEYG). Residues 345–366 (RPAYPDQGGYDQGYQQGATTYG) show a composition bias toward low complexity. Residues 455–504 (NIIGRGQDAQFRLPDTGVSRRHLEIRWDGQVALLADLNSTNGTTVNNAPV) form the FHA domain.

Interacts with (phosphorylated) MviN and (phosphorylated) PknB via the FHA domain. Binds to the PknB juxtamembrane domain with an affinity that is modulated by the degree and the pattern of phosphorylation of this juxtamembrane domain. In terms of processing, phosphorylated by PknB.

It is found in the cytoplasm. Functionally, regulates cell growth and peptidoglycan synthesis by binding to MviN. May inhibit the late stages of peptidoglycan synthesis. The protein is FHA domain-containing protein FhaA (fhaA) of Mycobacterium tuberculosis (strain ATCC 25618 / H37Rv).